Consider the following 545-residue polypeptide: Probable zinc metalloprotease EGY2, chloroplastic (545 aa).

The transit peptide at 1-63 directs the protein to the chloroplast; the sequence is MQLPAMSCSP…QIRNRRFVCQ (63 aa). Residues 66-142 are disordered; sequence TETEPDGDGN…DATPASDAQE (77 aa). Positions 68–85 are enriched in acidic residues; the sequence is TEPDGDGNGDEEKEELGD. 2 stretches are compositionally biased toward polar residues: residues 88–109 and 117–129; these read SSPSVYSVTQENGSAESETNAD and NTEPLSSSDTVQN. The next 7 helical transmembrane spans lie at 256 to 276, 300 to 320, 325 to 345, 363 to 383, 426 to 446, 473 to 493, and 513 to 533; these read AVPEWFAAASFGVVTIFTLLL, VYGALVTAAIIGVHEIAHILA, GIKLAVPYFVPSWQIGSFGAI, AAGPLAGFSLGFVLLLLGFIL, PLVLWAWAGLLINAINSIPAG, LLGISALFNDVAFYWVVLIFF, and YISIGVAILLFGLLVCLPYPF.

Belongs to the peptidase M50B family.

Its subcellular location is the plastid. The protein resides in the chloroplast membrane. Its function is as follows. Probable membrane-associated metalloprotease that may be involved in chloroplast development. The sequence is that of Probable zinc metalloprotease EGY2, chloroplastic (EGY2) from Oryza sativa subsp. indica (Rice).